The following is a 123-amino-acid chain: MAREGSRKLGQHYEGVAARYLESKGIRIIERNVHNRGGEIDLIGMDAEALVFFEVRFRADGALVDPISSVSAVKQQRLVRAASFYLHRHGLWDRVSRIDVIGITPGHSSKYRIQWIKNAIQAD.

It belongs to the UPF0102 family.

This is UPF0102 protein Maqu_2464 from Marinobacter nauticus (strain ATCC 700491 / DSM 11845 / VT8) (Marinobacter aquaeolei).